We begin with the raw amino-acid sequence, 665 residues long: Fermitin family homolog 3 (665 aa).

Tyrosine 11 bears the Phosphotyrosine mark. Residues 229–556 (WLDSSRCLMQ…SLPDFGISYV (328 aa)) form the FERM domain. Residues 354–453 (DHLRIFRPRK…WMAGCRLASK (100 aa)) enclose the PH domain. A Phosphotyrosine modification is found at tyrosine 502. Threonine 589 is subject to Phosphothreonine.

This sequence belongs to the kindlin family. In terms of assembly, interacts with ITGB1, ITGB2 and ITGB3 (via cytoplasmic tails).

It localises to the cell projection. It is found in the podosome. Its function is as follows. Plays a central role in cell adhesion in hematopoietic cells. Acts by activating the integrin beta-1-3 (ITGB1, ITGB2 and ITGB3). Required for integrin-mediated platelet adhesion and leukocyte adhesion to endothelial cells. Required for activation of integrin beta-2 (ITGB2) in polymorphonuclear granulocytes (PMNs). The sequence is that of Fermitin family homolog 3 (FERMT3) from Bos taurus (Bovine).